Reading from the N-terminus, the 225-residue chain is Glycerol-3-phosphate acyltransferase (225 aa).

6 helical membrane passes run 1–21 (MAIWLLCNGVLLIVAYFLGSF), 56–76 (GPGLATLGVDICKGAGAVALV), 95–115 (IGLWLSLVVIMAGLMAILGHS), 134–154 (VLLVMSWTVGLAALGIFALVV), 159–178 (IVSLSSISAAISLPVLMFVA), and 182–201 (LAYVLFSITAGVYVVWRHWA).

This sequence belongs to the PlsY family. In terms of assembly, probably interacts with PlsX.

It localises to the cell inner membrane. It catalyses the reaction an acyl phosphate + sn-glycerol 3-phosphate = a 1-acyl-sn-glycero-3-phosphate + phosphate. The protein operates within lipid metabolism; phospholipid metabolism. In terms of biological role, catalyzes the transfer of an acyl group from acyl-phosphate (acyl-PO(4)) to glycerol-3-phosphate (G3P) to form lysophosphatidic acid (LPA). This enzyme utilizes acyl-phosphate as fatty acyl donor, but not acyl-CoA or acyl-ACP. In Acaryochloris marina (strain MBIC 11017), this protein is Glycerol-3-phosphate acyltransferase.